We begin with the raw amino-acid sequence, 377 residues long: Lipoyl synthase, mitochondrial (377 aa).

Residues Cys-98, Cys-103, Cys-109, Cys-128, Cys-132, Cys-135, and Ser-343 each coordinate [4Fe-4S] cluster. The Radical SAM core domain occupies Lys-113–Leu-332.

This sequence belongs to the radical SAM superfamily. Lipoyl synthase family. Requires [4Fe-4S] cluster as cofactor.

The protein localises to the mitochondrion. It carries out the reaction [[Fe-S] cluster scaffold protein carrying a second [4Fe-4S](2+) cluster] + N(6)-octanoyl-L-lysyl-[protein] + 2 oxidized [2Fe-2S]-[ferredoxin] + 2 S-adenosyl-L-methionine + 4 H(+) = [[Fe-S] cluster scaffold protein] + N(6)-[(R)-dihydrolipoyl]-L-lysyl-[protein] + 4 Fe(3+) + 2 hydrogen sulfide + 2 5'-deoxyadenosine + 2 L-methionine + 2 reduced [2Fe-2S]-[ferredoxin]. It participates in protein modification; protein lipoylation via endogenous pathway; protein N(6)-(lipoyl)lysine from octanoyl-[acyl-carrier-protein]: step 2/2. Functionally, catalyzes the radical-mediated insertion of two sulfur atoms into the C-6 and C-8 positions of the octanoyl moiety bound to the lipoyl domains of lipoate-dependent enzymes, thereby converting the octanoylated domains into lipoylated derivatives. The polypeptide is Lipoyl synthase, mitochondrial (Candida tropicalis (strain ATCC MYA-3404 / T1) (Yeast)).